The sequence spans 239 residues: Probable transcriptional regulatory protein Sca_0317 (239 aa).

It belongs to the TACO1 family. YeeN subfamily.

It is found in the cytoplasm. This chain is Probable transcriptional regulatory protein Sca_0317, found in Staphylococcus carnosus (strain TM300).